Reading from the N-terminus, the 226-residue chain is DNA mismatch repair protein MutH (226 aa).

This sequence belongs to the MutH family.

It is found in the cytoplasm. Its function is as follows. Sequence-specific endonuclease that cleaves unmethylated GATC sequences. It is involved in DNA mismatch repair. The polypeptide is DNA mismatch repair protein MutH (Vibrio campbellii (strain ATCC BAA-1116)).